Here is a 690-residue protein sequence, read N- to C-terminus: Protein SPT2 homolog (690 aa).

The important for interaction with DNA stretch occupies residues 1–579 (MDFHNILVMA…PGHRPVFRPQ (579 aa)). Residues 40–82 (ESAAVQAFLRRKEEEKRKKELEEKRKKERLLAKRIELKHDRKA) adopt a coiled-coil conformation. Disordered stretches follow at residues 105 to 167 (PKKR…APAP) and 186 to 619 (EIKV…QEEI). Residues 186-228 (EIKVVKKIEERPRTAEELREREYLERKNKRVETQKKKSEKEVK) show a composition bias toward basic and acidic residues. Low complexity predominate over residues 229–243 (SAGISSSSKKATSLK). Basic and acidic residues-rich tracts occupy residues 244–259 (ECADAKLSRSAADKHA) and 271–285 (TDKKPKAPALTEKHS). Polar residues predominate over residues 369–380 (HETNSSAKRPSS). The segment covering 383–396 (GKGGSGHPAGGSSA) has biased composition (gly residues). A compositionally biased stretch (low complexity) spans 397–442 (GPGRSSSNSGTGPGRPGSVSSPGPGRQGSSSAAGPGRPSSSSSLGP). 3 stretches are compositionally biased toward gly residues: residues 443–457 (GRLGSGSGVGPGRPG), 465–477 (GRPGGSSGTGPGR), and 489–521 (LGSGMGTGPGRPGVGPSAGPGRPGSSSGTGPGR). A compositionally biased stretch (polar residues) spans 545 to 565 (VSETISSKNLVTRPSNGQING). The tract at residues 580–690 (GIGRPPVGYK…KRQSKKLRTR (111 aa)) is important for interaction with histones. Positions 593–617 (DDDDDDDEYDSEMDDFIEDEGEPQE) are enriched in acidic residues. The stretch at 650–690 (REQQKEEARSLRLGVQEDLEELRREEEELKRKRQSKKLRTR) forms a coiled coil.

It belongs to the SPT2 family. As to quaternary structure, interacts with POLR1A. Interacts with histones. Interacts with a heterotetrameric complex formed by histone H3 and H4, especially when the histone tetramer is not bound to DNA.

It localises to the nucleus. Its subcellular location is the nucleolus. Its function is as follows. Histone chaperone that stabilizes pre-existing histone tetramers and regulates replication-independent histone exchange on chromatin. Required for normal chromatin refolding in the coding region of transcribed genes, and for the suppression of spurious transcription. Binds DNA and histones and promotes nucleosome assembly (in vitro). Modulates RNA polymerase 1-mediated transcription. Required for optimal growth in the presence of the DNA damaging agents actinomycin D or mitomycin C (in vitro). Facilitates formation of tetrameric histone complexes containing histone H3 and H4. Modulates RNA polymerase 1-mediated transcription. Binds DNA, with a preference for branched DNA species, such as Y-form DNA and Holliday junction DNA. In Gallus gallus (Chicken), this protein is Protein SPT2 homolog (SPTY2D1).